Reading from the N-terminus, the 238-residue chain is Flagellar L-ring protein (238 aa).

The first 16 residues, 1-16 (MNKAILAVAMVLLLAG), serve as a signal peptide directing secretion. A lipid anchor (N-palmitoyl cysteine) is attached at cysteine 17. Cysteine 17 carries S-diacylglycerol cysteine lipidation.

It belongs to the FlgH family. The basal body constitutes a major portion of the flagellar organelle and consists of four rings (L,P,S, and M) mounted on a central rod.

Its subcellular location is the cell outer membrane. It localises to the bacterial flagellum basal body. Its function is as follows. Assembles around the rod to form the L-ring and probably protects the motor/basal body from shearing forces during rotation. The protein is Flagellar L-ring protein of Brucella abortus (strain 2308).